Reading from the N-terminus, the 444-residue chain is Sensor protein CiaH (444 aa).

The next 2 membrane-spanning stretches (helical) occupy residues 21–41 (FGVFTLIFSTMTLIILQVMHS) and 183–203 (LIVVVMASFWILSLLASLYLA). The region spanning 223 to 438 (NASHELRTPL…IFEVKIAIQT (216 aa)) is the Histidine kinase domain. At His-226 the chain carries Phosphohistidine; by autocatalysis.

It localises to the cell membrane. The catalysed reaction is ATP + protein L-histidine = ADP + protein N-phospho-L-histidine.. Its function is as follows. Member of the two-component regulatory system CiaH/CiaR. Involved in early steps of competence regulation and in penicillin susceptibility. Probably phosphorylates CiaR. This chain is Sensor protein CiaH (ciaH), found in Streptococcus pneumoniae serotype 4 (strain ATCC BAA-334 / TIGR4).